We begin with the raw amino-acid sequence, 549 residues long: Cation/acetate symporter ActP (549 aa).

13 helical membrane-spanning segments follow: residues 33 to 53, 77 to 97, 103 to 123, 148 to 168, 183 to 203, 206 to 226, 262 to 282, 303 to 323, 355 to 375, 404 to 424, 428 to 448, 464 to 484, and 493 to 513; these read WQAI…TYWA, LAIA…ALVF, GLIY…LIAE, ILSA…QMVG, IAVV…GMLA, WVQI…AFMV, ISAL…PHIL, GFMG…IMLV, LFLG…VAGL, VSKI…VLFE, IAFM…PIIL, GGWL…TIWV, and IFPY…GIWF.

The protein belongs to the sodium:solute symporter (SSF) (TC 2.A.21) family.

It localises to the cell inner membrane. Transports acetate. This is Cation/acetate symporter ActP from Citrobacter koseri (strain ATCC BAA-895 / CDC 4225-83 / SGSC4696).